The primary structure comprises 403 residues: 8-amino-7-oxononanoate synthase (403 aa).

A substrate-binding site is contributed by R25. Residue 112 to 113 (GY) coordinates pyridoxal 5'-phosphate. Residue H137 coordinates substrate. 3 residues coordinate pyridoxal 5'-phosphate: S182, H210, and T239. K242 carries the post-translational modification N6-(pyridoxal phosphate)lysine. Residue T358 coordinates substrate.

Belongs to the class-II pyridoxal-phosphate-dependent aminotransferase family. BioF subfamily. In terms of assembly, homodimer. Pyridoxal 5'-phosphate serves as cofactor.

It catalyses the reaction 6-carboxyhexanoyl-[ACP] + L-alanine + H(+) = (8S)-8-amino-7-oxononanoate + holo-[ACP] + CO2. It participates in cofactor biosynthesis; biotin biosynthesis. Its function is as follows. Catalyzes the decarboxylative condensation of pimeloyl-[acyl-carrier protein] and L-alanine to produce 8-amino-7-oxononanoate (AON), [acyl-carrier protein], and carbon dioxide. This is 8-amino-7-oxononanoate synthase from Marinomonas sp. (strain MWYL1).